Consider the following 1829-residue polypeptide: Protein let-418 (1829 aa).

Composition is skewed to acidic residues over residues 1–17 (MSTE…ESME) and 25–39 (ATEE…EQGD). Disordered regions lie at residues 1-81 (MSTE…YNST) and 147-198 (MAAQ…SDQE). The segment covering 48–63 (RSSRKKGGKGGKKGSK) has biased composition (basic residues). PHD-type zinc fingers lie at residues 256-303 (NDYC…CIEH) and 317-365 (DEFC…CETV). 2 Chromo domains span residues 401-458 (LKPP…PPEF) and 489-550 (MQIH…NEDI). The Helicase ATP-binding domain occupies 614-798 (RHCWSNGTDA…FHLLNFLSKE (185 aa)). 627-634 (DEMGLGKT) contributes to the ATP binding site. The DEAH box motif lies at 749 to 752 (DEAH). The Helicase C-terminal domain maps to 930 to 1093 (LLQKMLRKLK…GKTMSKTELD (164 aa)). Disordered regions lie at residues 1168–1198 (ASYQ…EPDP), 1234–1289 (SENM…MPPL), 1415–1495 (AANG…ARPS), and 1745–1829 (NGER…PMET). Positions 1177–1186 (GQEEEEEEET) are enriched in acidic residues. Composition is skewed to polar residues over residues 1234–1247 (SENM…QNQT) and 1418–1427 (GSAQGSSRST). The span at 1429-1444 (KPKEEPKEEPMEKEDA) shows a compositional bias: basic and acidic residues. Residues 1446 to 1455 (ETVNGATSEP) are compositionally biased toward polar residues. Basic and acidic residues predominate over residues 1474 to 1490 (DEAKEPKEEPIETEKPR). Residues 1749–1773 (MEEDEPVEAEEEEGVKQEPDDETQD) are compositionally biased toward acidic residues. A compositionally biased stretch (low complexity) spans 1792 to 1811 (DVPSTSAAAAVSSETAADAE). Over residues 1819–1829 (APTDEPEPMET) the composition is skewed to acidic residues.

In terms of assembly, component of the MEC (MEP-1-containing complex) complex that contains let-418, mep-1 and hda-1. Component of a NURD complex that contains let-418, hda-1, lin-40 and lin-53. Interacts with lin-1. Interacts with pie-1. Interacts with akir-1. Expressed in embryos and larva.

It is found in the nucleus. Part of a NuRD (Nucleosome Remodeling and Deacetylase) complex which is implicated in the synMuv B pathway that negatively regulates specification of vulval cell fate. This negative regulation is thought to be mediated via interaction with the promoter of lin-39, a key regulator in vulva development, and is dependent on the presence lin-1. Contributes to negative regulation of lag-2 which is expressed in the gut during larval development. Has a broad role in development. In association with akir-1, plays a role in regulating the transcription of antimicrobial peptide genes in response to fungal infection. The polypeptide is Protein let-418 (Caenorhabditis elegans).